The sequence spans 341 residues: Methionine import ATP-binding protein MetN 1 (341 aa).

Residues 2-241 (IEFKNVNKVF…PQTNTAKNFV (240 aa)) enclose the ABC transporter domain. Residue 38–45 (GYSGAGKS) coordinates ATP.

It belongs to the ABC transporter superfamily. Methionine importer (TC 3.A.1.24) family. As to quaternary structure, the complex is composed of two ATP-binding proteins (MetN), two transmembrane proteins (MetI) and a solute-binding protein (MetQ).

The protein resides in the cell membrane. The enzyme catalyses L-methionine(out) + ATP + H2O = L-methionine(in) + ADP + phosphate + H(+). It carries out the reaction D-methionine(out) + ATP + H2O = D-methionine(in) + ADP + phosphate + H(+). Functionally, part of the ABC transporter complex MetNIQ involved in methionine import. Responsible for energy coupling to the transport system. The protein is Methionine import ATP-binding protein MetN 1 of Staphylococcus epidermidis (strain ATCC 35984 / DSM 28319 / BCRC 17069 / CCUG 31568 / BM 3577 / RP62A).